We begin with the raw amino-acid sequence, 434 residues long: Trigger factor (434 aa).

The PPIase FKBP-type domain occupies 163 to 248 (GDTAVIDFAG…VHDIKRKELP (86 aa)).

Belongs to the FKBP-type PPIase family. Tig subfamily.

The protein localises to the cytoplasm. The enzyme catalyses [protein]-peptidylproline (omega=180) = [protein]-peptidylproline (omega=0). Its function is as follows. Involved in protein export. Acts as a chaperone by maintaining the newly synthesized protein in an open conformation. Functions as a peptidyl-prolyl cis-trans isomerase. This is Trigger factor from Shouchella clausii (strain KSM-K16) (Alkalihalobacillus clausii).